The following is a 245-amino-acid chain: NAD(P)H-hydrate epimerase (245 aa).

Positions 16-224 constitute a YjeF N-terminal domain; the sequence is AAALDAELMA…HIADKYDLEV (209 aa). 68 to 72 provides a ligand contact to (6S)-NADPHX; it reads NNGGD. 2 residues coordinate K(+): Asn69 and Asp131. (6S)-NADPHX is bound by residues 135 to 141 and Asp164; that span reads GFSFKPP. Ser167 contacts K(+).

This sequence belongs to the NnrE/AIBP family. K(+) is required as a cofactor.

The protein resides in the cytoplasm. It is found in the mitochondrion. It catalyses the reaction (6R)-NADHX = (6S)-NADHX. It carries out the reaction (6R)-NADPHX = (6S)-NADPHX. In terms of biological role, catalyzes the epimerization of the S- and R-forms of NAD(P)HX, a damaged form of NAD(P)H that is a result of enzymatic or heat-dependent hydration. This is a prerequisite for the S-specific NAD(P)H-hydrate dehydratase to allow the repair of both epimers of NAD(P)HX. This Yarrowia lipolytica (strain CLIB 122 / E 150) (Yeast) protein is NAD(P)H-hydrate epimerase.